The following is a 303-amino-acid chain: tRNA dimethylallyltransferase (303 aa).

9 to 16 (GPTAVGKT) lines the ATP pocket. Substrate is bound at residue 11-16 (TAVGKT). Residues 34 to 37 (DSRQ) form an interaction with substrate tRNA region.

The protein belongs to the IPP transferase family. In terms of assembly, monomer. It depends on Mg(2+) as a cofactor.

The enzyme catalyses adenosine(37) in tRNA + dimethylallyl diphosphate = N(6)-dimethylallyladenosine(37) in tRNA + diphosphate. Its function is as follows. Catalyzes the transfer of a dimethylallyl group onto the adenine at position 37 in tRNAs that read codons beginning with uridine, leading to the formation of N6-(dimethylallyl)adenosine (i(6)A). The polypeptide is tRNA dimethylallyltransferase (Petrotoga mobilis (strain DSM 10674 / SJ95)).